The chain runs to 206 residues: MGAKEVKPTRSELIELKKKIKLSEGGHKLLKMKRDGLILEFFDILSKAKDVRSELDAAYEKANVKIGIAESVEGRITIKSTAFAMKDAPQIVLESHNIMGVVVPKIESSSVRKPINKRGYGLLGTSSYIDEAVDSYEELVEKIILAAEIETTMKKLLDDIEKTKRRVNALEFKVIPELTEAMVFIRLRLEEMERENTFRLKRIKKA.

It belongs to the V-ATPase D subunit family. Has multiple subunits with at least A(3), B(3), C, D, E, F, H, I and proteolipid K(x).

The protein localises to the cell membrane. Its function is as follows. Component of the A-type ATP synthase that produces ATP from ADP in the presence of a proton gradient across the membrane. This is A-type ATP synthase subunit D from Methanococcoides burtonii (strain DSM 6242 / NBRC 107633 / OCM 468 / ACE-M).